An 865-amino-acid polypeptide reads, in one-letter code: MGCAPSIHVSQSGVIYCRDSDESNSPRQTSSVSQGPTAPLHGLFVQTDAADAMPPSRAAGPPGAVRVRRSRAELGSGSSTGSSGPATTTCRGRRRHCCSSAEAETQTSYTSVKVLLIFAKEDSQSDGFWWACDRAGYRCNIARTPESALECFLDKHHEIIVIDHRQSRNFDAEAVCRSIRATNPSEHTVILAVVSQASDDHEEASVLPLLHAGFNRRFMENSSIIACYNELIQIEHGEVRSQFKLRACNSVFTALDHCHEAIEITSDDHVIQYVNPAFERMMGYHKGELLGKELADLPKSDKNRADLLDTINTCIKKGKEWQGVYYARRKSGDSIQQHVKITPVIGQGGKIRHFVSLKKLCCTTDSNKQIHRIHRDSGDNSQTEPHSFRHKSRRKESIDVKSISSRGSDAPSLQNRRYPSMARIHSMTIEAPITKVINIINAAQENSPVTVAEALDRVLEILRTTELYSPQLGTKDEDPHTSDLVGGLMTDGLRRLSGNEYVFTKNVHHSHSHLSMPITINDVPPSIAQLLDNEESWDFNIFELEAVTHKRPLVYLGLKVFSRFGVCEFLNCTETTLRAWLQVIEANYHSSNAYHNSTHAADVLHATAFFLGKERVKGSLDQLDEVAALIAATVHDVDHPGRTNSFLCNAGSELAVLYNDTAVLESHHTALAFQLTVKDTKCNIFKNIDRNHYRTLRQAIIDMVLATEMTKHFEHVNKFVNSINKPLAAESEGSDCECNPTGKNFPENQILIKRMMIKCADVANPCRPLDLCIEWAGRISEEYFAQTDEEKRQGLPVVMPVFDRNTCSIPKSQISFIDYFITDMFDAWDAFAHLPALMQHLADNYKHWKTLDDLKCKTLRLPSDS.

2 disordered regions span residues 17 to 40 (CRDS…TAPL) and 52 to 92 (AMPP…TCRG). Residues 23 to 36 (SNSPRQTSSVSQGP) are compositionally biased toward polar residues. Residues 75–90 (GSGSSTGSSGPATTTC) show a composition bias toward low complexity. A PAS domain is found at 247 to 318 (ACNSVFTALD…DTINTCIKKG (72 aa)). The segment at 373-415 (IHRDSGDNSQTEPHSFRHKSRRKESIDVKSISSRGSDAPSLQN) is disordered. Positions 402-415 (SISSRGSDAPSLQN) are enriched in polar residues. Position 497 is a phosphoserine (S497). One can recognise a PDEase domain in the interval 519–855 (TINDVPPSIA…KHWKTLDDLK (337 aa)). H595 acts as the Proton donor in catalysis. Positions 599, 635, and 636 each coordinate a divalent metal cation. S731 and S734 each carry phosphoserine. D761 contacts a divalent metal cation.

This sequence belongs to the cyclic nucleotide phosphodiesterase family. PDE8 subfamily. It depends on a divalent metal cation as a cofactor. Widely expressed.

It carries out the reaction 3',5'-cyclic AMP + H2O = AMP + H(+). Its pathway is purine metabolism; 3',5'-cyclic AMP degradation; AMP from 3',5'-cyclic AMP: step 1/1. Its function is as follows. Hydrolyzes the second messenger cAMP, which is a key regulator of many important physiological processes. May be involved in specific signaling in the thyroid gland. This is High affinity cAMP-specific and IBMX-insensitive 3',5'-cyclic phosphodiesterase 8B (Pde8b) from Mus musculus (Mouse).